Here is a 471-residue protein sequence, read N- to C-terminus: Putative ABC transporter ATP-binding protein STK_11360 (471 aa).

2 ABC transporter domains span residues leucine 4 to leucine 241 and valine 255 to aspartate 470. Residues glycine 37–serine 44 and glycine 286–serine 293 each bind ATP.

Belongs to the ABC transporter superfamily.

It is found in the cell membrane. In terms of biological role, probably part of an ABC transporter complex. Responsible for energy coupling to the transport system. The polypeptide is Putative ABC transporter ATP-binding protein STK_11360 (Sulfurisphaera tokodaii (strain DSM 16993 / JCM 10545 / NBRC 100140 / 7) (Sulfolobus tokodaii)).